We begin with the raw amino-acid sequence, 285 residues long: Proteasome subunit beta (285 aa).

A propeptide spans 1-50 (removed in mature form; by autocatalysis); that stretch reads MTAEHPARLPQAFMTPGSSSFVDFLAAHDPSLLPSSRALPAGSAPPAPHG. Thr-51 acts as the Nucleophile in catalysis. The segment at 266–285 is disordered; it reads RTRQARSSRSRHGSLGGDLR.

The protein belongs to the peptidase T1B family. The 20S proteasome core is composed of 14 alpha and 14 beta subunits that assemble into four stacked heptameric rings, resulting in a barrel-shaped structure. The two inner rings, each composed of seven catalytic beta subunits, are sandwiched by two outer rings, each composed of seven alpha subunits. The catalytic chamber with the active sites is on the inside of the barrel. Has a gated structure, the ends of the cylinder being occluded by the N-termini of the alpha-subunits. Is capped by the proteasome-associated ATPase, ARC.

The protein resides in the cytoplasm. The catalysed reaction is Cleavage of peptide bonds with very broad specificity.. The protein operates within protein degradation; proteasomal Pup-dependent pathway. With respect to regulation, the formation of the proteasomal ATPase ARC-20S proteasome complex, likely via the docking of the C-termini of ARC into the intersubunit pockets in the alpha-rings, may trigger opening of the gate for substrate entry. Interconversion between the open-gate and close-gate conformations leads to a dynamic regulation of the 20S proteasome proteolysis activity. Functionally, component of the proteasome core, a large protease complex with broad specificity involved in protein degradation. The chain is Proteasome subunit beta from Sanguibacter keddieii (strain ATCC 51767 / DSM 10542 / NCFB 3025 / ST-74).